A 365-amino-acid chain; its full sequence is MTQQPTLFIDRDGTLIDEPKTDFQIDSLEKLKFERNVIPALLKLKNRYRFVMVSNQDGLGTDSFPQEDFDKPHNAMLAVFRSQGIEFDDILICPHKPEDNCDCRKPKIKLLKKYIDKKLFDPADSFVIGDRPTDVQLAENLGIRALQYHPENLDWDMIAEKLLREPVADPKGLGQPRHAVVARKTKETDIKVEVWLDEAGVNQINTGIGFFDHMLDQIATHGGFRMNVSCKGDLHIDDHHTIEDVALALGAALKEAIGNKRGIQRFGFVLPMDECKAECALDLSGRPYFKFKAKFNRDKVGDFSTEMTEHFFQSIAYTLLATLHLSVKGDNAHHQIEALFKAFGRTLRQAIKIEGNEMPSSKGVL.

The histidinol-phosphatase stretch occupies residues 1-176; sequence MTQQPTLFID…VADPKGLGQP (176 aa). Asp10 acts as the Nucleophile in catalysis. The Mg(2+) site is built by Asp10 and Asp12. Residue Asp12 is the Proton donor of the active site. Residues Cys93, His95, Cys101, and Cys103 each contribute to the Zn(2+) site. Asp130 contributes to the Mg(2+) binding site. The tract at residues 177–365 is imidazoleglycerol-phosphate dehydratase; that stretch reads RHAVVARKTK…NEMPSSKGVL (189 aa).

This sequence in the N-terminal section; belongs to the histidinol-phosphatase family. The protein in the C-terminal section; belongs to the imidazoleglycerol-phosphate dehydratase family. Requires Mg(2+) as cofactor. Zn(2+) serves as cofactor.

Its subcellular location is the cytoplasm. The catalysed reaction is D-erythro-1-(imidazol-4-yl)glycerol 3-phosphate = 3-(imidazol-4-yl)-2-oxopropyl phosphate + H2O. It carries out the reaction L-histidinol phosphate + H2O = L-histidinol + phosphate. The protein operates within amino-acid biosynthesis; L-histidine biosynthesis; L-histidine from 5-phospho-alpha-D-ribose 1-diphosphate: step 6/9. It functions in the pathway amino-acid biosynthesis; L-histidine biosynthesis; L-histidine from 5-phospho-alpha-D-ribose 1-diphosphate: step 8/9. This is Histidine biosynthesis bifunctional protein HisB from Mannheimia succiniciproducens (strain KCTC 0769BP / MBEL55E).